The sequence spans 47 residues: Variabilin (47 aa).

The Cell attachment site motif lies at 32–34; sequence RGD.

Contains 2 disulfide bonds. In terms of tissue distribution, expressed in salivary glands.

The protein resides in the secreted. Functionally, potently inhibits platelet aggregation induced by ADP (IC(50)=157 nM, complete inhibition at 514 nM). Also inhibits platelet aggregation induced by collagen and by the thrombin receptor peptide SFLLRNP. Is a potent antagonist of the fibrinogen receptor glycoprotein IIb-IIIa (ITGA2B/ITGB3) and the vitronectin receptor alpha-v/beta-3 (ITGAV/ITGB3). The chain is Variabilin from Dermacentor variabilis (American dog tick).